The primary structure comprises 149 residues: UPF0179 protein Mbar_A0292 (149 aa).

The protein belongs to the UPF0179 family.

This Methanosarcina barkeri (strain Fusaro / DSM 804) protein is UPF0179 protein Mbar_A0292.